The primary structure comprises 521 residues: MTQDKILILDFGSQVTQLIARRVREAHVYCELHSFDMPLDEIKAFNPKGIILSGGPNSVYESDYQADTGIFDLGIPILGICYGMQFMAHHLGGEVQPGNQREFGYAQVKTIDSELTRGIQDDTPNTLDVWMSHGDKVSKLPTGFTVIGDTPSCPIAMMENAEKQFYGIQFHPEVTHTKQGRALLNRFVLDICGAQPSWTMPNYIEEAVAKIREQVGSDEVILGLSGGVDSSVAAALIHRAIGDQLTCVFVDHGLLRLNEGKMVMDMFARNLGVKVIHVDAEGQFMEKLAGVTDPEKKRKIIGAEFIEVFDAEEKKLTNAKWLAQGTIYPDVIESAGAKTKKAHAIKSHHNVGGLPENMKLKLLEPLRDLFKDEVRELGVALGLPREMVYRHPFPGPGLGVRILGEVKKEYADLLRQADDIFIQELRNTTDENGTSWYDLTSQAFAVFLPVKSVGVMGDGRTYDYVVALRAVITSDFMTAHWAELPYSLLGRVSNRIINEVKGINRVVYDVSGKPPATIEWE.

A Glutamine amidotransferase type-1 domain is found at Lys5–Ser197. Cys81 (nucleophile) is an active-site residue. Active-site residues include His171 and Glu173. Residues Trp198–Arg390 enclose the GMPS ATP-PPase domain. Ser225–Ser231 is a binding site for ATP.

As to quaternary structure, homodimer.

The catalysed reaction is XMP + L-glutamine + ATP + H2O = GMP + L-glutamate + AMP + diphosphate + 2 H(+). It functions in the pathway purine metabolism; GMP biosynthesis; GMP from XMP (L-Gln route): step 1/1. Catalyzes the synthesis of GMP from XMP. The sequence is that of GMP synthase [glutamine-hydrolyzing] from Neisseria meningitidis serogroup C / serotype 2a (strain ATCC 700532 / DSM 15464 / FAM18).